Here is a 204-residue protein sequence, read N- to C-terminus: Urease accessory protein UreG 1 (204 aa).

Residue 14–21 (GPVGSGKT) coordinates GTP.

It belongs to the SIMIBI class G3E GTPase family. UreG subfamily. In terms of assembly, homodimer. UreD, UreF and UreG form a complex that acts as a GTP-hydrolysis-dependent molecular chaperone, activating the urease apoprotein by helping to assemble the nickel containing metallocenter of UreC. The UreE protein probably delivers the nickel.

The protein localises to the cytoplasm. In terms of biological role, facilitates the functional incorporation of the urease nickel metallocenter. This process requires GTP hydrolysis, probably effectuated by UreG. The chain is Urease accessory protein UreG 1 from Methylorubrum extorquens (strain PA1) (Methylobacterium extorquens).